The following is a 1822-amino-acid chain: Sperm flagellar protein 2 (1822 aa).

The 105-residue stretch at 1–105 (MSEILCQWLN…LLYQLYIALQ (105 aa)) folds into the Calponin-homology (CH) domain. Coiled-coil stretches lie at residues 227–260 (KALE…KDLQ), 321–396 (AHEA…KQAK), 732–758 (NQAQ…KAQK), and 871–909 (CEKV…LAEL). Disordered regions lie at residues 896 to 1004 (KEAE…VPQP), 1278 to 1327 (EEEK…EATP), 1664 to 1718 (SIPS…NNEK), and 1803 to 1822 (EHVQ…EEKK). The span at 911 to 920 (LPTPPPAPPP) shows a compositional bias: pro residues. Basic and acidic residues-rich tracts occupy residues 921 to 930 (EPEKEKEIHQ) and 949 to 968 (PHGK…ETAL). Residues 975 to 987 (KGKSSGGKVPVKK) show a composition bias toward low complexity. Basic and acidic residues-rich tracts occupy residues 1278–1292 (EEEK…KEKS) and 1303–1314 (KEPPKKKQEDKK). An interaction with IFT20 region spans residues 1324–1676 (EATPVIVTTE…SAEKTSSTDA (353 aa)). Residues 1686–1712 (EENAAREERKLKDDTEKREQKDEEIPE) are a coiled coil. The segment covering 1688–1708 (NAAREERKLKDDTEKREQKDE) has biased composition (basic and acidic residues).

As to quaternary structure, interacts (via C-terminus) with IFT20. Interacts with DYNC1I2.

It localises to the cell projection. Its subcellular location is the cilium. It is found in the flagellum. The protein localises to the cytoplasm. The protein resides in the golgi apparatus. Required for correct axoneme development in spermatozoa. Important for normal development of the manchette and sperm head morphology. Essential for male fertility. Plays a role in localization of the intraflagellar transport protein IFT20 to the manchette, suggesting function as an adapter for dynein-mediated protein transport during spermatogenesis. Also plays a role in bone growth where it seems to be required for normal osteoblast differentiation. The protein is Sperm flagellar protein 2 (SPEF2) of Homo sapiens (Human).